Reading from the N-terminus, the 397-residue chain is uncharacterized protein (397 aa).

4 helical membrane-spanning segments follow: residues 62–79, 92–109, 135–154, and 167–189; these read VLLF…LIAI, WYGL…LVVT, VVFL…STLS, and AFLK…FPGI.

It localises to the cell membrane. This is an uncharacterized protein from Archaeoglobus fulgidus (strain ATCC 49558 / DSM 4304 / JCM 9628 / NBRC 100126 / VC-16).